The sequence spans 111 residues: Large ribosomal subunit protein uL22 (111 aa).

This sequence belongs to the universal ribosomal protein uL22 family. In terms of assembly, part of the 50S ribosomal subunit.

Its function is as follows. This protein binds specifically to 23S rRNA; its binding is stimulated by other ribosomal proteins, e.g. L4, L17, and L20. It is important during the early stages of 50S assembly. It makes multiple contacts with different domains of the 23S rRNA in the assembled 50S subunit and ribosome. Functionally, the globular domain of the protein is located near the polypeptide exit tunnel on the outside of the subunit, while an extended beta-hairpin is found that lines the wall of the exit tunnel in the center of the 70S ribosome. The chain is Large ribosomal subunit protein uL22 from Francisella philomiragia subsp. philomiragia (strain ATCC 25017 / CCUG 19701 / FSC 153 / O#319-036).